Consider the following 240-residue polypeptide: tRNA pseudouridine synthase A (240 aa).

Asp50 serves as the catalytic Nucleophile. Residue Tyr109 participates in substrate binding.

This sequence belongs to the tRNA pseudouridine synthase TruA family. In terms of assembly, homodimer.

The enzyme catalyses uridine(38/39/40) in tRNA = pseudouridine(38/39/40) in tRNA. Formation of pseudouridine at positions 38, 39 and 40 in the anticodon stem and loop of transfer RNAs. This chain is tRNA pseudouridine synthase A, found in Campylobacter jejuni (strain RM1221).